Reading from the N-terminus, the 188-residue chain is UPF0398 protein ABC2016 (188 aa).

Belongs to the UPF0398 family.

The chain is UPF0398 protein ABC2016 from Shouchella clausii (strain KSM-K16) (Alkalihalobacillus clausii).